The sequence spans 459 residues: Ribulose bisphosphate carboxylase large chain (459 aa).

Residue Lys4 is modified to N6,N6,N6-trimethyllysine. The substrate site is built by Asn113 and Thr163. Lys165 acts as the Proton acceptor in catalysis. Lys167 provides a ligand contact to substrate. Residues Lys191, Asp193, and Glu194 each coordinate Mg(2+). Position 191 is an N6-carboxylysine (Lys191). Residue His284 is the Proton acceptor of the active site. Residues Arg285, His317, and Ser369 each contribute to the substrate site.

It belongs to the RuBisCO large chain family. Type I subfamily. As to quaternary structure, heterohexadecamer of 8 large chains and 8 small chains; disulfide-linked. The disulfide link is formed within the large subunit homodimers. The cofactor is Mg(2+). The disulfide bond which can form in the large chain dimeric partners within the hexadecamer appears to be associated with oxidative stress and protein turnover.

Its subcellular location is the plastid. The protein localises to the chloroplast. It carries out the reaction 2 (2R)-3-phosphoglycerate + 2 H(+) = D-ribulose 1,5-bisphosphate + CO2 + H2O. The catalysed reaction is D-ribulose 1,5-bisphosphate + O2 = 2-phosphoglycolate + (2R)-3-phosphoglycerate + 2 H(+). In terms of biological role, ruBisCO catalyzes two reactions: the carboxylation of D-ribulose 1,5-bisphosphate, the primary event in carbon dioxide fixation, as well as the oxidative fragmentation of the pentose substrate in the photorespiration process. Both reactions occur simultaneously and in competition at the same active site. The protein is Ribulose bisphosphate carboxylase large chain of Apium graveolens (Celery).